We begin with the raw amino-acid sequence, 304 residues long: Coenzyme PQQ synthesis protein B (304 aa).

The protein belongs to the PqqB family.

The protein operates within cofactor biosynthesis; pyrroloquinoline quinone biosynthesis. Its function is as follows. May be involved in the transport of PQQ or its precursor to the periplasm. This Gluconobacter oxydans (strain 621H) (Gluconobacter suboxydans) protein is Coenzyme PQQ synthesis protein B.